We begin with the raw amino-acid sequence, 581 residues long: Proline--tRNA ligase (581 aa).

The protein belongs to the class-II aminoacyl-tRNA synthetase family. ProS type 1 subfamily. Homodimer.

The protein localises to the cytoplasm. The catalysed reaction is tRNA(Pro) + L-proline + ATP = L-prolyl-tRNA(Pro) + AMP + diphosphate. Functionally, catalyzes the attachment of proline to tRNA(Pro) in a two-step reaction: proline is first activated by ATP to form Pro-AMP and then transferred to the acceptor end of tRNA(Pro). As ProRS can inadvertently accommodate and process non-cognate amino acids such as alanine and cysteine, to avoid such errors it has two additional distinct editing activities against alanine. One activity is designated as 'pretransfer' editing and involves the tRNA(Pro)-independent hydrolysis of activated Ala-AMP. The other activity is designated 'posttransfer' editing and involves deacylation of mischarged Ala-tRNA(Pro). The misacylated Cys-tRNA(Pro) is not edited by ProRS. The polypeptide is Proline--tRNA ligase (Azoarcus sp. (strain BH72)).